Consider the following 194-residue polypeptide: Peptidyl-tRNA hydrolase (194 aa).

Position 17 (Tyr17) interacts with tRNA. The Proton acceptor role is filled by His22. Residues Tyr68, Asn70, and Asn116 each coordinate tRNA.

Belongs to the PTH family. In terms of assembly, monomer.

Its subcellular location is the cytoplasm. The catalysed reaction is an N-acyl-L-alpha-aminoacyl-tRNA + H2O = an N-acyl-L-amino acid + a tRNA + H(+). Hydrolyzes ribosome-free peptidyl-tRNAs (with 1 or more amino acids incorporated), which drop off the ribosome during protein synthesis, or as a result of ribosome stalling. Its function is as follows. Catalyzes the release of premature peptidyl moieties from peptidyl-tRNA molecules trapped in stalled 50S ribosomal subunits, and thus maintains levels of free tRNAs and 50S ribosomes. The chain is Peptidyl-tRNA hydrolase from Pseudomonas putida (strain GB-1).